The chain runs to 220 residues: Charged multivesicular body protein 2a (220 aa).

2 coiled-coil regions span residues 12 to 53 (EEML…MAKQ) and 199 to 220 (PSAA…LRRD). The tract at residues 179 to 208 (LSNLPSTGGSLSVAGAKKGEPSAALADADA) is disordered. Positions 208 to 218 (ADLEERLNNLR) match the MIT-interacting motif motif.

Belongs to the SNF7 family. In terms of assembly, probable core component of the endosomal sorting required for transport complex III (ESCRT-III). ESCRT-III components are thought to multimerize to form a flat lattice on the perimeter membrane of the endosome.

It localises to the late endosome membrane. Its subcellular location is the cytoplasm. Functionally, probable core component of the endosomal sorting required for transport complex III (ESCRT-III) which is involved in multivesicular bodies (MVBs) formation and sorting of endosomal cargo proteins into MVBs. MVBs contain intraluminal vesicles (ILVs) that are generated by invagination and scission from the limiting membrane of the endosome and mostly are delivered to lysosomes enabling degradation of membrane proteins, such as stimulated growth factor receptors, lysosomal enzymes and lipids. In Xenopus tropicalis (Western clawed frog), this protein is Charged multivesicular body protein 2a (chmp2a).